The sequence spans 321 residues: Lipoyl synthase (321 aa).

[4Fe-4S] cluster-binding residues include cysteine 68, cysteine 73, cysteine 79, cysteine 94, cysteine 98, cysteine 101, and serine 308. In terms of domain architecture, Radical SAM core spans 80–297 (FNHGTATFMI…KAIALDLGFT (218 aa)).

Belongs to the radical SAM superfamily. Lipoyl synthase family. The cofactor is [4Fe-4S] cluster.

It is found in the cytoplasm. It carries out the reaction [[Fe-S] cluster scaffold protein carrying a second [4Fe-4S](2+) cluster] + N(6)-octanoyl-L-lysyl-[protein] + 2 oxidized [2Fe-2S]-[ferredoxin] + 2 S-adenosyl-L-methionine + 4 H(+) = [[Fe-S] cluster scaffold protein] + N(6)-[(R)-dihydrolipoyl]-L-lysyl-[protein] + 4 Fe(3+) + 2 hydrogen sulfide + 2 5'-deoxyadenosine + 2 L-methionine + 2 reduced [2Fe-2S]-[ferredoxin]. It functions in the pathway protein modification; protein lipoylation via endogenous pathway; protein N(6)-(lipoyl)lysine from octanoyl-[acyl-carrier-protein]: step 2/2. Its function is as follows. Catalyzes the radical-mediated insertion of two sulfur atoms into the C-6 and C-8 positions of the octanoyl moiety bound to the lipoyl domains of lipoate-dependent enzymes, thereby converting the octanoylated domains into lipoylated derivatives. The chain is Lipoyl synthase from Tolumonas auensis (strain DSM 9187 / NBRC 110442 / TA 4).